The sequence spans 3305 residues: Microtubule-actin cross-linking factor 1, isoforms 6/7 (3305 aa).

Disordered regions lie at residues 1–24 (MGKP…GEDE), 108–140 (VQKS…MPPN), 152–202 (LSEV…KSVD), 239–272 (AAAS…GFSE), 333–381 (EEWE…VAVS), 941–1007 (EPAI…PEWS), and 2865–2896 (SVEP…MPIL). Over residues 120–129 (PNAERKDNVN) the composition is skewed to basic and acidic residues. EF-hand domains follow at residues 2958-2993 (HKKS…SKFP) and 2994-3029 (TTKL…NKDA). Residues Asp-2971, Asp-2973, Asp-2975, Lys-2977, Glu-2982, Asp-3007, Asp-3009, Asp-3011, Tyr-3013, and Glu-3018 each coordinate Ca(2+). The region spanning 3034–3106 (TDADKIEDEV…EFLVKNDPCR (73 aa)) is the GAR domain. Residues 3122–3305 (PEGASQGMTP…ASPRTPGPKR (184 aa)) form a disordered region. A compositionally biased stretch (low complexity) spans 3142–3176 (SSRAASPTRSSSSASQSNHSCTSMPSSPATPASGT). Residues 3193–3212 (FHSSRTSLAGDTSNSSSPAS) are compositionally biased toward polar residues. Over residues 3227-3241 (SRPGSRAGSRAGSRA) the composition is skewed to low complexity. Positions 3256-3266 (ETQSACSDTSE) are enriched in polar residues. The span at 3267–3278 (SSAAGGQGSSRR) shows a compositional bias: low complexity.

The protein resides in the cytoplasm. The protein localises to the cytoskeleton. This Mus musculus (Mouse) protein is Microtubule-actin cross-linking factor 1, isoforms 6/7.